We begin with the raw amino-acid sequence, 242 residues long: 1-(5-phosphoribosyl)-5-[(5-phosphoribosylamino)methylideneamino] imidazole-4-carboxamide isomerase (242 aa).

Catalysis depends on Asp-10, which acts as the Proton acceptor. Asp-132 serves as the catalytic Proton donor.

It belongs to the HisA/HisF family.

The protein localises to the cytoplasm. The catalysed reaction is 1-(5-phospho-beta-D-ribosyl)-5-[(5-phospho-beta-D-ribosylamino)methylideneamino]imidazole-4-carboxamide = 5-[(5-phospho-1-deoxy-D-ribulos-1-ylimino)methylamino]-1-(5-phospho-beta-D-ribosyl)imidazole-4-carboxamide. It participates in amino-acid biosynthesis; L-histidine biosynthesis; L-histidine from 5-phospho-alpha-D-ribose 1-diphosphate: step 4/9. The sequence is that of 1-(5-phosphoribosyl)-5-[(5-phosphoribosylamino)methylideneamino] imidazole-4-carboxamide isomerase from Streptococcus sanguinis (strain SK36).